The primary structure comprises 445 residues: Transcription termination factor MTERF15, mitochondrial (445 aa).

A mitochondrion-targeting transit peptide spans 1–25 (MASKLKTFINLRDYPITLFNQIRSL).

Belongs to the mTERF family.

It localises to the mitochondrion. In terms of biological role, transcription termination factor required for mitochondrial NAD2 intron 3 splicing and normal membrane respiratory chain Complex I activity. Essential for normal plant growth and development. Binds to RNA but not to double-stranded DNA. In Arabidopsis thaliana (Mouse-ear cress), this protein is Transcription termination factor MTERF15, mitochondrial.